The sequence spans 118 residues: NADH-ubiquinone oxidoreductase chain 3 (118 aa).

2 helical membrane-spanning segments follow: residues 4 to 24 and 87 to 107; these read FAPI…PLGV and IDPF…IGSL.

It belongs to the complex I subunit 3 family.

It localises to the mitochondrion membrane. It carries out the reaction a ubiquinone + NADH + 5 H(+)(in) = a ubiquinol + NAD(+) + 4 H(+)(out). Functionally, core subunit of the mitochondrial membrane respiratory chain NADH dehydrogenase (Complex I) that is believed to belong to the minimal assembly required for catalysis. Complex I functions in the transfer of electrons from NADH to the respiratory chain. The immediate electron acceptor for the enzyme is believed to be ubiquinone. The sequence is that of NADH-ubiquinone oxidoreductase chain 3 (ND3) from Panax ginseng (Korean ginseng).